A 361-amino-acid polypeptide reads, in one-letter code: Epi-isozizaene synthase (361 aa).

Mg(2+) is bound by residues Asp99, Asp103, Asn240, Ser244, and Glu248. A DDXXD motif motif is present at residues 99 to 103 (DDRHD).

The protein belongs to the terpene synthase family. The cofactor is Mg(2+). Mn(2+) serves as cofactor. Requires Fe(3+) as cofactor.

It carries out the reaction (2E,6E)-farnesyl diphosphate = (+)-epi-isozizaene + diphosphate. It participates in sesquiterpene biosynthesis; epi-isozizaene biosynthesis. Its function is as follows. Catalyzes the cyclization of farnesyl diphosphate (FPP) to the sesquiterpene epi-isozizaene. The protein is Epi-isozizaene synthase (cyc1) of Streptomyces coelicolor (strain ATCC BAA-471 / A3(2) / M145).